A 225-amino-acid polypeptide reads, in one-letter code: uncharacterized protein (225 aa).

The span at 1-19 (MKFNSISPNKQHHTGFTTS) shows a compositional bias: polar residues. A disordered region spans residues 1-21 (MKFNSISPNKQHHTGFTTSNN).

This is an uncharacterized protein from Dictyostelium discoideum (Social amoeba).